We begin with the raw amino-acid sequence, 462 residues long: Cysteine--tRNA ligase (462 aa).

Cysteine 28 contributes to the Zn(2+) binding site. The 'HIGH' region motif lies at 30–40; the sequence is VTIYDLCHIGH. The Zn(2+) site is built by cysteine 211, histidine 236, and glutamate 240. The 'KMSKS' region signature appears at 268 to 272; that stretch reads KMSKS. Residue lysine 271 coordinates ATP.

The protein belongs to the class-I aminoacyl-tRNA synthetase family. In terms of assembly, monomer. It depends on Zn(2+) as a cofactor.

It localises to the cytoplasm. The catalysed reaction is tRNA(Cys) + L-cysteine + ATP = L-cysteinyl-tRNA(Cys) + AMP + diphosphate. This is Cysteine--tRNA ligase from Aliivibrio salmonicida (strain LFI1238) (Vibrio salmonicida (strain LFI1238)).